The sequence spans 467 residues: Serine/threonine-protein phosphatase 2A 56 kDa regulatory subunit epsilon isoform (467 aa).

The interval Met-1–Gly-40 is disordered. Ser-2 is subject to N-acetylserine. Thr-7 carries the post-translational modification Phosphothreonine. A compositionally biased stretch (basic residues) spans Lys-20–Arg-29. A phosphoserine mark is found at Ser-30, Ser-32, and Ser-34. Positions Ser-30–Gly-40 are enriched in low complexity.

It belongs to the phosphatase 2A regulatory subunit B56 family. In terms of assembly, found in a complex with at least ARL2, PPP2CB; PPP2R1A, PPP2R2A, PPP2R5E and TBCD. PP2A consists of a common heterodimeric core enzyme, composed of a 36 kDa catalytic subunit (subunit C) and a 65 kDa constant regulatory subunit (PR65 or subunit A), that associates with a variety of regulatory subunits. Proteins that associate with the core dimer include three families of regulatory subunits B (the R2/B/PR55/B55, R3/B''/PR72/PR130/PR59 and R5/B'/B56 families), the 48 kDa variable regulatory subunit, viral proteins, and cell signaling molecules. Interacts with SGO1. Phosphorylated on serine residues.

It is found in the cytoplasm. In terms of biological role, the B regulatory subunit might modulate substrate selectivity and catalytic activity, and might also direct the localization of the catalytic enzyme to a particular subcellular compartment. This Homo sapiens (Human) protein is Serine/threonine-protein phosphatase 2A 56 kDa regulatory subunit epsilon isoform (PPP2R5E).